Reading from the N-terminus, the 1178-residue chain is DNA-directed RNA polymerase I subunit 2 (1178 aa).

A C4-type zinc finger spans residues 1097 to 1137; the sequence is CSLCGSLLTSSVVNVQQKKLIQEIGKLPPGRTPKKVTCYSC.

The protein belongs to the RNA polymerase beta chain family. In terms of assembly, component of the RNA polymerase I (Pol I) complex consisting of at least 13 subunits.

The protein localises to the nucleus. The enzyme catalyses RNA(n) + a ribonucleoside 5'-triphosphate = RNA(n+1) + diphosphate. Its function is as follows. DNA-dependent RNA polymerase catalyzes the transcription of DNA into RNA using the four ribonucleoside triphosphates as substrates. Second largest core component of RNA polymerase I which synthesizes ribosomal RNA precursors. Proposed to contribute to the polymerase catalytic activity and forms the polymerase active center together with the largest subunit. Pol I is composed of mobile elements and NRPA2 is part of the core element with the central large cleft and probably a clamp element that moves to open and close the cleft. Essential for the completion of the three rounds of mitosis in female megaspores required for the development of mature gametophytes. The chain is DNA-directed RNA polymerase I subunit 2 from Arabidopsis thaliana (Mouse-ear cress).